A 3930-amino-acid polypeptide reads, in one-letter code: Hybrid PKS-NRPS synthetase apdA (3930 aa).

One can recognise a Ketosynthase family 3 (KS3) domain in the interval 2–440 (QDLIAIVGSA…GTNAHAIIEG (439 aa)). Residues C176, H313, and H361 each act as for beta-ketoacyl synthase activity in the active site. Residues 557–879 (IFTGQGAQWA…MRRGDNEIEA (323 aa)) form a malonyl-CoA:ACP transacylase (MAT) domain region. Residues 948–1085 (HELLGRRVPD…GRLIINYGDP (138 aa)) form an N-terminal hotdog fold region. The interval 948 to 1251 (HELLGRRVPD…SMKSMSEPQP (304 aa)) is dehydratase (DH) domain. In terms of domain architecture, PKS/mFAS DH spans 948–1252 (HELLGRRVPD…MKSMSEPQPE (305 aa)). Residue H980 is the Proton acceptor; for dehydratase activity of the active site. The interval 1100-1252 (NVPVDMGRFY…MKSMSEPQPE (153 aa)) is C-terminal hotdog fold. The active-site Proton donor; for dehydratase activity is the D1159. The segment at 1389 to 1588 (QDDMLNRFYM…FSGLDCLAPD (200 aa)) is methyltransferase (MT) domain. A ketoreductase (KR) domain region spans residues 2088 to 2229 (ATYLLAGMTG…SLASIIGNAA (142 aa)). The 78-residue stretch at 2326–2403 (AVIPIVQEAF…QICEDAVRQF (78 aa)) folds into the Carrier 1 domain. S2363 carries the post-translational modification O-(pantetheine 4'-phosphoryl)serine. 2 disordered regions span residues 2414 to 2433 (VAPN…SNAT) and 2444 to 2494 (DAAN…VDAD). The segment covering 2445–2473 (AANGDYESSSQGDDSRGNSSSSSSHTSPS) has biased composition (low complexity). The condensation (C) domain stretch occupies residues 2509 to 2937 (PASFAQSRLW…SLPVNQLPVT (429 aa)). Positions 2971–3371 (KSFPEETAIK…GTLIFMGRMD (401 aa)) are adenylation (A) (KR) domain. Residues 2971–3371 (KSFPEETAIK…GTLIFMGRMD (401 aa)) form a reductase (RED) domain region. Residues 3493–3572 (RHLSLAEGEL…QMARRISRRK (80 aa)) enclose the Carrier 2 domain. Position 3532 is an O-(pantetheine 4'-phosphoryl)serine (S3532).

The protein in the C-terminal section; belongs to the NRP synthetase family.

The protein operates within secondary metabolite biosynthesis. Hybrid PKS-NRPS synthetase; part of the gene cluster that mediates the biosynthesis of aspyridones. The polyketide-amino acid backbone preaspyridone A is first assembled by the PKS-NRPS hybrid apdA. The assembly of preaspyridone A is initiated by loading of malonyl-CoA onto apdA, followed by decarboxylation to yield the acetyl starter unit. The growing polyketide chain then elongates into a tetraketide. The adpA PKS module catalyzes three Claisen condensations, as well as beta-keto processing and methylation. Alpha-methylation step during polyketide synthesis is a prerequisite and a key checkpoint for chain transfer between PKS and NRPS modules. The downstream NRPS module contains the condensation (C), adenylation (A), and thiolation (T) domains and catalyzes the incorporation of tyrosine via the formation of the L-tyrosinyl-thioester and the amide linkage between L-tyrosinyl-thioester and the tetraketide. The bimodular assembly line is terminated with a reductase (R) domain that facilitates formation and release of the tetramic acid product. Because apdA lacks a designated enoylreductase (ER) domain, the required activity is provided the enoyl reductase apdC. ApdC appears to operate with different stereoselectivity in different PKS cycle. Combined with apdC, apdA is proposed to synthesize preaspyridone A via about 20 enzymatic steps. A number of oxidative steps performed successively by the cytochrome P450 monooxygenases apdE and apdB are required for the conversion of preaspyridone A to aspyridone A. The cytochrome P450 monooxygenase apdE is responsible for the oxidative dephenylation of preaspyridone A. Finally, the predicted FAD-dependent monooxygenase apdD and the acyl-CoA dehydrogenase apdG may be involved in the transformation of aspyridone A into aspyridone B. The sequence is that of Hybrid PKS-NRPS synthetase apdA from Emericella nidulans (strain FGSC A4 / ATCC 38163 / CBS 112.46 / NRRL 194 / M139) (Aspergillus nidulans).